The primary structure comprises 135 residues: Putative large ribosomal subunit protein eL32' (135 aa).

This sequence belongs to the eukaryotic ribosomal protein eL32 family.

The chain is Putative large ribosomal subunit protein eL32' (Rpl32-ps) from Mus musculus (Mouse).